The primary structure comprises 460 residues: Inactive ubiquitin carboxyl-terminal hydrolase MINDY-4B (460 aa).

The tract at residues 41 to 76 is disordered; sequence TNNSTPQNHEGNHTSADENEDGTGLSQPKGQGHLPS.

Belongs to the MINDY deubiquitinase family. FAM188 subfamily.

The chain is Inactive ubiquitin carboxyl-terminal hydrolase MINDY-4B from Homo sapiens (Human).